We begin with the raw amino-acid sequence, 1388 residues long: Dicer-like protein 2 (1388 aa).

The region spanning 23–203 (MLEASMKENI…LLMVESNLDA (181 aa)) is the Helicase ATP-binding domain. An ATP-binding site is contributed by 36 to 43 (MDTGSGKT). The DEAH box motif lies at 144–147 (DEAH). The region spanning 368-537 (KFESLLNFLD…DDERQLQSVS (170 aa)) is the Helicase C-terminal domain. Residues 564 to 658 (AMAHLHHFCA…LPLTKKPELK (95 aa)) form the Dicer dsRNA-binding fold domain. RNase III domains are found at residues 906 to 1059 (ISAI…VDGG) and 1098 to 1281 (NDRL…VDSG). 3 residues coordinate Mg(2+): Glu1137, Asp1267, and Glu1270.

It belongs to the helicase family. Dicer subfamily. Requires Mg(2+) as cofactor. Mn(2+) is required as a cofactor.

Dicer-like endonuclease involved in cleaving double-stranded RNA in the RNA interference (RNAi) pathway. Produces 21 to 25 bp dsRNAs (siRNAs) which target the selective destruction of homologous RNAs leading to sequence-specific suppression of gene expression, called post-transcriptional gene silencing (PTGS). Part of a broad host defense response against viral infection and transposons. This is Dicer-like protein 2 (dcl2) from Aspergillus fumigatus (strain ATCC MYA-4609 / CBS 101355 / FGSC A1100 / Af293) (Neosartorya fumigata).